A 374-amino-acid polypeptide reads, in one-letter code: WAT1-related protein At1g60050 (374 aa).

10 consecutive transmembrane segments (helical) span residues 11-31, 42-62, 82-102, 107-127, 145-165, 194-214, 228-248, 255-275, 292-312, and 315-335; these read IVPF…TILA, FVFI…YSFY, IFLL…LGLS, IVVC…SLAL, IGTL…GPFI, WALG…WNII, VVSA…AFME, ELKL…GSII, VPLF…SFFV, and LHYG…LIMW. An EamA domain is found at 26–155; that stretch reads ALTILAKTAL…GTLICFTGAF (130 aa).

Belongs to the drug/metabolite transporter (DMT) superfamily. Plant drug/metabolite exporter (P-DME) (TC 2.A.7.4) family.

The protein localises to the membrane. The sequence is that of WAT1-related protein At1g60050 from Arabidopsis thaliana (Mouse-ear cress).